We begin with the raw amino-acid sequence, 80 residues long: Cytochrome c oxidase subunit 7B, mitochondrial (80 aa).

Residues 1 to 24 (MLPLAKNALSRLQVRSIQQVVARQ) constitute a mitochondrion transit peptide. Over 25–39 (SHQKRAPSFHDKYGN) the chain is Mitochondrial matrix. The chain crosses the membrane as a helical span at residues 40 to 60 (AILAGGAIFCVSTWTYTATQI). Topologically, residues 61–80 (GIEWNMSPVGRVTPKEWRDQ) are mitochondrial intermembrane.

The protein belongs to the cytochrome c oxidase VIIb family. As to quaternary structure, component of the cytochrome c oxidase (complex IV, CIV), a multisubunit enzyme composed of 14 subunits. The complex is composed of a catalytic core of 3 subunits MT-CO1, MT-CO2 and MT-CO3, encoded in the mitochondrial DNA, and 11 supernumerary subunits COX4I, COX5A, COX5B, COX6A, COX6B, COX6C, COX7A, COX7B, COX7C, COX8 and NDUFA4, which are encoded in the nuclear genome. The complex exists as a monomer or a dimer and forms supercomplexes (SCs) in the inner mitochondrial membrane with NADH-ubiquinone oxidoreductase (complex I, CI) and ubiquinol-cytochrome c oxidoreductase (cytochrome b-c1 complex, complex III, CIII), resulting in different assemblies (supercomplex SCI(1)III(2)IV(1) and megacomplex MCI(2)III(2)IV(2)).

The protein localises to the mitochondrion inner membrane. The protein operates within energy metabolism; oxidative phosphorylation. Its function is as follows. Component of the cytochrome c oxidase, the last enzyme in the mitochondrial electron transport chain which drives oxidative phosphorylation. The respiratory chain contains 3 multisubunit complexes succinate dehydrogenase (complex II, CII), ubiquinol-cytochrome c oxidoreductase (cytochrome b-c1 complex, complex III, CIII) and cytochrome c oxidase (complex IV, CIV), that cooperate to transfer electrons derived from NADH and succinate to molecular oxygen, creating an electrochemical gradient over the inner membrane that drives transmembrane transport and the ATP synthase. Cytochrome c oxidase is the component of the respiratory chain that catalyzes the reduction of oxygen to water. Electrons originating from reduced cytochrome c in the intermembrane space (IMS) are transferred via the dinuclear copper A center (CU(A)) of subunit 2 and heme A of subunit 1 to the active site in subunit 1, a binuclear center (BNC) formed by heme A3 and copper B (CU(B)). The BNC reduces molecular oxygen to 2 water molecules using 4 electrons from cytochrome c in the IMS and 4 protons from the mitochondrial matrix. Plays a role in proper central nervous system (CNS) development in vertebrates. This is Cytochrome c oxidase subunit 7B, mitochondrial (Cox7b) from Mus musculus (Mouse).